The primary structure comprises 827 residues: NT-3 growth factor receptor (827 aa).

Residues 1 to 31 form the signal peptide; that stretch reads MDVSLCPTKCTFWRVFLLWSIWGDYLLSVLA. 2 disulfides stabilise this stretch: cysteine 32/cysteine 38 and cysteine 36/cysteine 45. Over 32–430 the chain is Extracellular; the sequence is CPANCLCSKT…ITVTHKPEED (399 aa). Residues asparagine 68, asparagine 72, and asparagine 79 are each glycosylated (N-linked (GlcNAc...) asparagine). LRR repeat units lie at residues 104 to 125 and 128 to 149; these read GLQR…AFAK and HLRY…LFQT. The region spanning 160–209 is the LRRCT domain; it reads NPFNCSCDIRWIQLWQEKGEANLQSQQLHCMNLDTAVILLRNMNITQCDL. A glycan (N-linked (GlcNAc...) asparagine) is linked at asparagine 163. 2 disulfide bridges follow: cysteine 164–cysteine 189 and cysteine 166–cysteine 207. Residues asparagine 203, asparagine 218, asparagine 232, asparagine 259, asparagine 267, asparagine 272, and asparagine 294 are each glycosylated (N-linked (GlcNAc...) asparagine). 2 Ig-like C2-type domains span residues 210–300 and 319–382; these read PEIS…VLLT and HCIA…VATN. Cysteine 231 and cysteine 284 form a disulfide bridge. A disulfide bridge links cysteine 320 with cysteine 362. Asparagine 375 and asparagine 388 each carry an N-linked (GlcNAc...) asparagine glycan. A helical transmembrane segment spans residues 431–455; sequence TFGVSIAVGLAAFACVLLVVLFIMI. The Cytoplasmic portion of the chain corresponds to 456-827; it reads NKYGRRSKFG…ATPIYLDILG (372 aa). Tyrosine 518 is subject to Phosphotyrosine; by autocatalysis. The 273-residue stretch at 540 to 812 folds into the Protein kinase domain; sequence IVLKRELGEG…LNIKEIYKIL (273 aa). ATP contacts are provided by residues 546 to 554 and lysine 574; that span reads LGEGAFGKV. Aspartate 681 (proton acceptor) is an active-site residue. A phosphotyrosine; by autocatalysis mark is found at tyrosine 707, tyrosine 711, tyrosine 712, and tyrosine 822.

It belongs to the protein kinase superfamily. Tyr protein kinase family. Insulin receptor subfamily. In terms of assembly, exists in a dynamic equilibrium between monomeric (low affinity) and dimeric (high affinity) structures. Interacts with PTPRS. In terms of processing, ligand-mediated auto-phosphorylation.

Its subcellular location is the membrane. The catalysed reaction is L-tyrosyl-[protein] + ATP = O-phospho-L-tyrosyl-[protein] + ADP + H(+). In terms of biological role, receptor tyrosine kinase involved in nervous system and probably heart development. Upon binding of its ligand NTF3/neurotrophin-3, NTRK3 autophosphorylates and activates different signaling pathways, including the phosphatidylinositol 3-kinase/AKT and the MAPK pathways, that control cell survival and differentiation. The KT and KD isoforms fail to stimulate transformation, process outgrowth or survival. Isoform KI25 exhibits tyrosine phosphorylation in the absence of ligand and is unable to mediate survival of neuronal cells. The polypeptide is NT-3 growth factor receptor (NTRK3) (Gallus gallus (Chicken)).